We begin with the raw amino-acid sequence, 213 residues long: Ribosomal RNA small subunit methyltransferase G (213 aa).

S-adenosyl-L-methionine contacts are provided by residues glycine 75, phenylalanine 80, 128–129 (IE), and arginine 144.

It belongs to the methyltransferase superfamily. RNA methyltransferase RsmG family.

The protein localises to the cytoplasm. The catalysed reaction is guanosine(527) in 16S rRNA + S-adenosyl-L-methionine = N(7)-methylguanosine(527) in 16S rRNA + S-adenosyl-L-homocysteine. Specifically methylates the N7 position of guanine in position 527 of 16S rRNA. The sequence is that of Ribosomal RNA small subunit methyltransferase G from Brucella ovis (strain ATCC 25840 / 63/290 / NCTC 10512).